The primary structure comprises 288 residues: MIRLYLQATKPGIVLSNLMSFIGGFLLASKGRINYLIFLVTLLGVLFIVTAGCVLNNIIDRDIDRKMERTKNRPLAIGSISILTCLIYALICSIIGIYLLYNYTNKLTMLLAIIGLIVYVGIYTKCMKRQSIYSTIIGSFSGAIPPVIGYCAVSNQFDTGALLLLLIFCLWQMPHSYAIAILRLQDYQAASIPILPIKKGIRITKNHIVIYIVAFIVTTILLNISGYTTSYQYLIVTNFINFWWLYLALQGYKEDNNDILWSKKMFIFSIIAITSLSLMMSLDSIFSR.

9 helical membrane passes run 8–28 (ATKPGIVLSNLMSFIGGFLLA), 35–55 (YLIFLVTLLGVLFIVTAGCVL), 80–100 (ISILTCLIYALICSIIGIYLL), 107–127 (LTMLLAIIGLIVYVGIYTKCM), 132–152 (IYSTIIGSFSGAIPPVIGYCA), 162–182 (LLLLLIFCLWQMPHSYAIAIL), 208–228 (IVIYIVAFIVTTILLNISGYT), 229–249 (TSYQYLIVTNFINFWWLYLAL), and 266–286 (FIFSIIAITSLSLMMSLDSIF).

This sequence belongs to the UbiA prenyltransferase family. Protoheme IX farnesyltransferase subfamily.

The protein localises to the cell membrane. It carries out the reaction heme b + (2E,6E)-farnesyl diphosphate + H2O = Fe(II)-heme o + diphosphate. It participates in porphyrin-containing compound metabolism; heme O biosynthesis; heme O from protoheme: step 1/1. Converts heme B (protoheme IX) to heme O by substitution of the vinyl group on carbon 2 of heme B porphyrin ring with a hydroxyethyl farnesyl side group. The chain is Protoheme IX farnesyltransferase from Baumannia cicadellinicola subsp. Homalodisca coagulata.